Reading from the N-terminus, the 274-residue chain is Putative homeobox protein Meis3-like 1 (274 aa).

An MEIS N-terminal domain is found at 12 to 65 (GGDVCSSDSFNEDNTAFAKQVRSERPFFSSNPELDNLMIQAIQVLRFHLLELEK). 2 disordered regions span residues 108 to 167 (DSGS…KRGI) and 228 to 248 (NRTG…GYTE). Positions 123 to 135 (GLASQSGDNSSDQ) are enriched in polar residues. A DNA-binding region (homeobox) is located at residues 161-223 (RNKKRGIFPK…NARRRIVQPM (63 aa)).

It belongs to the TALE/MEIS homeobox family.

It localises to the nucleus. This Homo sapiens (Human) protein is Putative homeobox protein Meis3-like 1 (MEIS3P1).